The following is a 187-amino-acid chain: Accessory gene regulator protein B (187 aa).

The next 5 helical transmembrane spans lie at 49-69 (LAYI…FYLI), 82-102 (FWCY…VLHF), 107-127 (TLMM…APAA), 143-163 (YFSI…KEPY), and 164-184 (TQFI…IYYS).

The protein belongs to the AgrB family.

The protein resides in the cell membrane. In terms of biological role, essential for the production of a quorum sensing system signal molecule, the autoinducing peptide (AIP). This quorum sensing system is responsible for the regulation of the expression of virulence factor genes. Involved in the proteolytic processing of AgrD, the precursor of AIP. This Staphylococcus aureus (strain MRSA252) protein is Accessory gene regulator protein B.